A 433-amino-acid polypeptide reads, in one-letter code: Histidine--tRNA ligase (433 aa).

Belongs to the class-II aminoacyl-tRNA synthetase family. As to quaternary structure, homodimer.

Its subcellular location is the cytoplasm. The catalysed reaction is tRNA(His) + L-histidine + ATP = L-histidyl-tRNA(His) + AMP + diphosphate + H(+). This Azoarcus sp. (strain BH72) protein is Histidine--tRNA ligase.